Consider the following 298-residue polypeptide: Diphthine methyl ester synthase (298 aa).

S-adenosyl-L-methionine contacts are provided by residues leucine 9, aspartate 85, glycine 88, 113-114, leucine 164, leucine 222, and histidine 247; that span reads SV.

It belongs to the diphthine synthase family.

The protein localises to the cytoplasm. It carries out the reaction 2-[(3S)-amino-3-carboxypropyl]-L-histidyl-[translation elongation factor 2] + 4 S-adenosyl-L-methionine = diphthine methyl ester-[translation elongation factor 2] + 4 S-adenosyl-L-homocysteine + 3 H(+). It functions in the pathway protein modification; peptidyl-diphthamide biosynthesis. Its function is as follows. S-adenosyl-L-methionine-dependent methyltransferase that catalyzes four methylations of the modified target histidine residue in translation elongation factor 2 (EF-2), to form an intermediate called diphthine methyl ester. The four successive methylation reactions represent the second step of diphthamide biosynthesis. The polypeptide is Diphthine methyl ester synthase (DPH5) (Candida glabrata (strain ATCC 2001 / BCRC 20586 / JCM 3761 / NBRC 0622 / NRRL Y-65 / CBS 138) (Yeast)).